The primary structure comprises 203 residues: Small ribosomal subunit protein uS4 (203 aa).

In terms of domain architecture, S4 RNA-binding spans 93–173 (RRLDNVVFRS…FPSWIQVDKA (81 aa)).

Belongs to the universal ribosomal protein uS4 family. Part of the 30S ribosomal subunit. Contacts protein S5. The interaction surface between S4 and S5 is involved in control of translational fidelity.

Its function is as follows. One of the primary rRNA binding proteins, it binds directly to 16S rRNA where it nucleates assembly of the body of the 30S subunit. With S5 and S12 plays an important role in translational accuracy. This is Small ribosomal subunit protein uS4 from Chlorobium limicola (strain DSM 245 / NBRC 103803 / 6330).